Consider the following 163-residue polypeptide: Single-stranded DNA-binding protein 2 (163 aa).

Residues 1 to 104 form the SSB domain; the sequence is MINNVVLVGR…VVADNFQMLE (104 aa). A disordered region spans residues 109–163; the sequence is REGGSTGSFNGGFNNNTSSSNSYSAPAQQTPNFGRDDSPFGNSNPMDISDDDLPF. Residues 119 to 130 are compositionally biased toward low complexity; sequence GGFNNNTSSSNS. The span at 131-140 shows a compositional bias: polar residues; that stretch reads YSAPAQQTPN. The Important for interaction with partner proteins motif lies at 158-163; the sequence is DDDLPF.

As to quaternary structure, homotetramer.

Functionally, plays an important role in DNA replication, recombination and repair. Binds to ssDNA and to an array of partner proteins to recruit them to their sites of action during DNA metabolism. The sequence is that of Single-stranded DNA-binding protein 2 (ssb2) from Streptococcus pyogenes serotype M6 (strain ATCC BAA-946 / MGAS10394).